Reading from the N-terminus, the 231-residue chain is PX domain-containing protein 1 (231 aa).

A PX domain is found at 1 to 134 (MASAVFEGTS…TFFERSPLDQ (134 aa)).

The polypeptide is PX domain-containing protein 1 (PXDC1) (Bos taurus (Bovine)).